We begin with the raw amino-acid sequence, 193 residues long: Acyl-homoserine-lactone synthase (193 aa).

Belongs to the autoinducer synthase family.

It carries out the reaction a fatty acyl-[ACP] + S-adenosyl-L-methionine = an N-acyl-L-homoserine lactone + S-methyl-5'-thioadenosine + holo-[ACP] + H(+). Required for the synthesis of N-(3-oxodecanoyl)-L-homoserine lactone (ODHL), an autoinducer molecule which binds to VanR. The protein is Acyl-homoserine-lactone synthase (vanI) of Vibrio anguillarum (Listonella anguillarum).